We begin with the raw amino-acid sequence, 255 residues long: MAVGKNKRLSKGKKGLKKRTQDPFSRKDEYSVKAPSTFAVRDVGKTLVNRTTGLKNANDSLKGRIFEVSLADLQNDEDHAFRKVKLRVDEVQGKNCLTNFHGLDFTSDKLRSLVRKWQTLIEANVTVKTTDDYLLRLFAIAFTKRRPNQIKKTTYARSSQIRAIRKKITEIIQREASTRTLAQLTKLIPEVIGREIEKSTHGIYPLQNVHIRKVKLLKSPKFDLGALLALHGESSTDDKGQKVEREFKEQVLESV.

Residues 1–18 are compositionally biased toward basic residues; the sequence is MAVGKNKRLSKGKKGLKK. The segment at 1–28 is disordered; it reads MAVGKNKRLSKGKKGLKKRTQDPFSRKD. A2 is modified (N-acetylalanine; partial). Residues 19–28 are compositionally biased toward basic and acidic residues; that stretch reads RTQDPFSRKD.

The protein belongs to the eukaryotic ribosomal protein eS1 family. In terms of assembly, component of the small ribosomal subunit. Mature ribosomes consist of a small (40S) and a large (60S) subunit. The 40S subunit contains about 33 different proteins and 1 molecule of RNA (18S). The 60S subunit contains about 49 different proteins and 3 molecules of RNA (25S, 5.8S and 5S).

The protein resides in the cytoplasm. The chain is Small ribosomal subunit protein eS1 from Ajellomyces capsulatus (strain G186AR / H82 / ATCC MYA-2454 / RMSCC 2432) (Darling's disease fungus).